The following is a 203-amino-acid chain: Holliday junction branch migration complex subunit RuvA (203 aa).

Residues 1-63 (MIDYLRGTLT…EDVIRLYGFR (63 aa)) form a domain I region. The tract at residues 64 to 142 (TKEKRSLFEK…ELHPGLFSQK (79 aa)) is domain II. The tract at residues 143–152 (EEQPKPHEKN) is flexible linker. The interval 153–203 (DGNQALDEAMEALKALGYVEKELKKVKPKLEQETLTTDAYIKKALQLMLNR) is domain III.

Belongs to the RuvA family. Homotetramer. Forms an RuvA(8)-RuvB(12)-Holliday junction (HJ) complex. HJ DNA is sandwiched between 2 RuvA tetramers; dsDNA enters through RuvA and exits via RuvB. An RuvB hexamer assembles on each DNA strand where it exits the tetramer. Each RuvB hexamer is contacted by two RuvA subunits (via domain III) on 2 adjacent RuvB subunits; this complex drives branch migration. In the full resolvosome a probable DNA-RuvA(4)-RuvB(12)-RuvC(2) complex forms which resolves the HJ.

The protein resides in the cytoplasm. In terms of biological role, the RuvA-RuvB-RuvC complex processes Holliday junction (HJ) DNA during genetic recombination and DNA repair, while the RuvA-RuvB complex plays an important role in the rescue of blocked DNA replication forks via replication fork reversal (RFR). RuvA specifically binds to HJ cruciform DNA, conferring on it an open structure. The RuvB hexamer acts as an ATP-dependent pump, pulling dsDNA into and through the RuvAB complex. HJ branch migration allows RuvC to scan DNA until it finds its consensus sequence, where it cleaves and resolves the cruciform DNA. The polypeptide is Holliday junction branch migration complex subunit RuvA (Halalkalibacterium halodurans (strain ATCC BAA-125 / DSM 18197 / FERM 7344 / JCM 9153 / C-125) (Bacillus halodurans)).